The sequence spans 294 residues: MTAQILDGKKAAAEVKSELVERIAALVARGITPGLATVLVGDDAPSQSYVRMKHQDANALGLASFERHLPAETSQDELDAVIDELNANPGVHGILVQIPLPKHLDEQAVLERIDPDKDADGLHPVNLGRLVLNVNGVITSPLPCTPVGAIQLMLRNGIELAGKHVVVVGRGITVGRALGLLLTRREINATVTLTHTGTVDLAAHLRQADVVISAVGVAHMIKAENLKPGVVVLDVGVSRERDEVTGKSKLLGDVAPDVADVASWISPNPGGVGPMTRALLMSNVVQAAEAVSSR.

NADP(+) contacts are provided by residues 169 to 171, T196, and V237; that span reads GRG.

Belongs to the tetrahydrofolate dehydrogenase/cyclohydrolase family. Homodimer.

The catalysed reaction is (6R)-5,10-methylene-5,6,7,8-tetrahydrofolate + NADP(+) = (6R)-5,10-methenyltetrahydrofolate + NADPH. It catalyses the reaction (6R)-5,10-methenyltetrahydrofolate + H2O = (6R)-10-formyltetrahydrofolate + H(+). The protein operates within one-carbon metabolism; tetrahydrofolate interconversion. Its function is as follows. Catalyzes the oxidation of 5,10-methylenetetrahydrofolate to 5,10-methenyltetrahydrofolate and then the hydrolysis of 5,10-methenyltetrahydrofolate to 10-formyltetrahydrofolate. The protein is Bifunctional protein FolD of Renibacterium salmoninarum (strain ATCC 33209 / DSM 20767 / JCM 11484 / NBRC 15589 / NCIMB 2235).